The primary structure comprises 405 residues: L-rhamnonate dehydratase (405 aa).

Substrate is bound by residues histidine 33 and arginine 59. 3 residues coordinate Mg(2+): aspartate 226, glutamate 252, and glutamate 280. Histidine 329 functions as the Proton acceptor in the catalytic mechanism. Glutamate 349 lines the substrate pocket.

The protein belongs to the mandelate racemase/muconate lactonizing enzyme family. RhamD subfamily. In terms of assembly, homooctamer; tetramer of dimers. It depends on Mg(2+) as a cofactor.

The enzyme catalyses L-rhamnonate = 2-dehydro-3-deoxy-L-rhamnonate + H2O. Its function is as follows. Catalyzes the dehydration of L-rhamnonate to 2-keto-3-deoxy-L-rhamnonate (KDR). This chain is L-rhamnonate dehydratase, found in Escherichia coli O127:H6 (strain E2348/69 / EPEC).